The following is an 887-amino-acid chain: MNSGGGGGLPPPSAAASPSSSSLAAAVAVAVAASSGVGGVPGGPAAAAGVKLKYCRYYAKDKTCFYGEECQFLHEDPAAGAAPGLGLHSNSVPLALAAAAGAAFPPGALPGGGAGPPAGPKKPELGVPGAATAGGGLDGPRVAIPGMDGGALTDASLTESYFSTSFIGVNGFGSPVETKYPLMQRMTSSSSSPSLLNDSAKPYTGHDLLTSSASSLFNDFGALNISQRRKPRKYRLGMLEERLVPMGSQARKAKNPLGCLADRCESGVPVSMVWWDRVPENNLQTPNPTASEFIPKGGSTSRLSNVSQSNMSAFSQVFSHPSMGSPATAGLAPGMSLSAGSSPLHSPKITPHTSPAPRRRSHTPNPASFMVPPSASTPANNPAPQPPSSGQVIQKETVGGTTYFYTDTTPAPLTGMVFPNYHIYPPTAPHVAYMQPKANAPSFFMADELRQELINRHLITMAQIDQADMPAVPTEVDSYHSLFPLEPLPPPNRIQKSSNFGYITSCYKAVNSKDDLPYCLRRIHGFRLVNTKCMVLVDMWKKIQHSNIVTLREVFTTKAFAEPSLVFAYDFHAGGETMMSRHFNDPNSDAYFTKRKWGQHDGPLPRQHAGLLPESLIWAYIVQLSSALRTIHTAGLACRVMDPTKILITSKTRLRVNCVGVFDVLTFDNSQNNNPLALMAQYQQADLISLGKVVLALACNSLAGIQRENLQKAMELVTINYSSDLKNLILYLLTDQNRMRSVNDIMPMIGARFYTQLDAAQMRNDVIEEDLAKEVQNGRLFRLLAKLGTINERPEFQKDPTWSETGDRYLLKLFRDHLFHQVTEAGAPWIDLSHIISCLNKLDAGVPEKISLISRDEKSVLVVTYSDLKRCFENTFQELIAAANGQL.

Residues 49–77 (GVKLKYCRYYAKDKTCFYGEECQFLHEDP) form a C3H1-type zinc finger. Disordered regions lie at residues 111 to 139 (GGGA…GLDG), 280 to 307 (ENNL…SNVS), and 321 to 393 (PSMG…GQVI). Residues 147-498 (MDGGALTDAS…PPPNRIQKSS (352 aa)) are necessary and sufficient for interaction with PABPC1 but not needed for interaction with PAN2. Composition is skewed to polar residues over residues 281–290 (NNLQTPNPTA) and 298–307 (GSTSRLSNVS). Positions 284–299 (QTPNPTASEFIPKGGS) match the PABPC-interacting motif-2 (PAM-2) motif. A phosphoserine mark is found at serine 354 and serine 361. The interval 463 to 750 (QIDQADMPAV…SVNDIMPMIG (288 aa)) is pseudokinase domain. ATP-binding positions include arginine 521, 570–577 (DFHAGGET), and 644–645 (TK). The interval 789-887 (TINERPEFQK…ELIAAANGQL (99 aa)) is knob domain.

Belongs to the protein kinase superfamily. PAN3 family. As to quaternary structure, homodimer. Forms a heterotrimer with a catalytic subunit PAN2 to form the poly(A)-nuclease (PAN) deadenylation complex. Interacts (via PAM-2 motif) with poly(A)-binding protein PABPC1 (via PABC domain), conferring substrate specificity of the enzyme complex. Interacts with the GW182 family proteins TNRC6A, TNRC6B and TNRC6C. Interacts with YTHDF3. In terms of assembly, interacts with PAN2. Interacts (via N-terminus) with PABPC1 at lower efficiency than isoform 3. Interacts with PAN2. Interacts (via N-terminus) with PABPC1 at higher efficiency than isoform 1.

It is found in the cytoplasm. Its subcellular location is the P-body. It localises to the nucleus. Its function is as follows. Regulatory subunit of the poly(A)-nuclease (PAN) deadenylation complex, one of two cytoplasmic mRNA deadenylases involved in general and miRNA-mediated mRNA turnover. PAN specifically shortens poly(A) tails of RNA and the activity is stimulated by poly(A)-binding protein (PABP). PAN deadenylation is followed by rapid degradation of the shortened mRNA tails by the CCR4-NOT complex. Deadenylated mRNAs are then degraded by two alternative mechanisms, namely exosome-mediated 3'-5' exonucleolytic degradation, or deadenylation-dependent mRNA decapping and subsequent 5'-3' exonucleolytic degradation by XRN1. PAN3 acts as a regulator for PAN activity, recruiting the catalytic subunit PAN2 to mRNA via its interaction with RNA and PABP, and to miRNA targets via its interaction with GW182 family proteins. In terms of biological role, decreases PAN2-mediated deadenylation, possibly by preventing progression into the second CCR4-NOT mediated stage of biphasic deadenylation. Has a significant effect on mRNA stability, generally stabilizing a subset of the transcriptome. Stabilizes mRNAs degraded by the AU-rich element (ARE)-mediated mRNA decay pathway but promotes degradation of mRNAs by the microRNA-mediated pathway. Its activity influences mRNP remodeling, specifically reducing formation of a subset of P-bodies containing GW220, an isoform of TNRC6A. Enhances PAN2 deadenylase activity and has an extensive effect on mRNA stability, generally enhancing mRNA decay across the transcriptome by multiple pathways, including the AU-rich element (ARE)-mediated pathway, microRNA-mediated pathway and the nonsense-mediated pathway (NMD). Its activity is required for efficient P-body formation. May be involved in regulating mRNAs of genes involved in cell cycle progression and cell proliferation. The sequence is that of PAN2-PAN3 deadenylation complex subunit Pan3 from Mus musculus (Mouse).